The primary structure comprises 154 residues: Nucleoside diphosphate kinase A1 (154 aa).

ATP contacts are provided by Lys-13, Phe-61, Arg-89, Thr-95, Arg-106, and Asn-116. His-119 acts as the Pros-phosphohistidine intermediate in catalysis.

The protein belongs to the NDK family. Mg(2+) is required as a cofactor.

The protein resides in the cytoplasm. It catalyses the reaction a 2'-deoxyribonucleoside 5'-diphosphate + ATP = a 2'-deoxyribonucleoside 5'-triphosphate + ADP. It carries out the reaction a ribonucleoside 5'-diphosphate + ATP = a ribonucleoside 5'-triphosphate + ADP. Its function is as follows. Major role in the synthesis of nucleoside triphosphates other than ATP. The ATP gamma phosphate is transferred to the NDP beta phosphate via a ping-pong mechanism, using a phosphorylated active-site intermediate. The chain is Nucleoside diphosphate kinase A1 from Xenopus laevis (African clawed frog).